The following is a 207-amino-acid chain: MNKAGQEARGFFIVLSAASGTGKTSIRRIFLERCPEVQFSVSYTTRTARPGEVDGQDYFFVTETDFRERIDQGEFAEWEENYGRYYGTSGKVMTRVLEQGRDMILDIEPRGAKTLKKNYQGGIYVFVLPPSLAELKARLRKRGESEAEIRKRLDKVREEIAEARGYDYVIFNDSLEKAVERLQVIYQAEKSRASRMSKQIQGVLDSE.

The 178-residue stretch at 10-187 folds into the Guanylate kinase-like domain; it reads GFFIVLSAAS…AVERLQVIYQ (178 aa). Residue 17–24 participates in ATP binding; sequence AASGTGKT.

Belongs to the guanylate kinase family.

Its subcellular location is the cytoplasm. The enzyme catalyses GMP + ATP = GDP + ADP. Functionally, essential for recycling GMP and indirectly, cGMP. This is Guanylate kinase from Syntrophus aciditrophicus (strain SB).